A 399-amino-acid chain; its full sequence is Transferrin receptor subunit ESAG6 (399 aa).

A signal peptide spans 1-17 (MRFWFVLLALLGKEIYA). N-linked (GlcNAc...) asparagine glycans are attached at residues Asn26 and Asn110. 3 disulfides stabilise this stretch: Cys34/Cys161, Cys84/Cys312, and Cys144/Cys215. N-linked (GlcNAc...) asparagine glycosylation is found at Asn235, Asn250, and Asn360. Residue Asn376 is the site of GPI-anchor amidated asparagine attachment. A propeptide spans 377–399 (AAAIHLSVSTAALCRSALLLGVL) (removed in mature form).

In terms of assembly, heterodimer composed of ESAG6 and ESAG7. Post-translationally, N-glycosylated. Glycosylation is dispensable for heterodimer formation and host transferrin binding.

Its subcellular location is the cell membrane. The protein resides in the flagellar pocket. Transferrin receptor subunit involved in receptor-mediated acquisition of iron from the environment by binding host TF/transferrin. This is Transferrin receptor subunit ESAG6 from Trypanosoma brucei brucei.